Here is a 111-residue protein sequence, read N- to C-terminus: Urease subunit beta (111 aa).

Belongs to the urease beta subunit family. As to quaternary structure, heterotrimer of UreA (gamma), UreB (beta) and UreC (alpha) subunits. Three heterotrimers associate to form the active enzyme.

It is found in the cytoplasm. The catalysed reaction is urea + 2 H2O + H(+) = hydrogencarbonate + 2 NH4(+). Its pathway is nitrogen metabolism; urea degradation; CO(2) and NH(3) from urea (urease route): step 1/1. In Geobacillus kaustophilus (strain HTA426), this protein is Urease subunit beta.